The sequence spans 182 residues: Thymidine kinase (182 aa).

8-15 (GPMFSGKT) contributes to the ATP binding site. The active-site Proton acceptor is the Glu-85. Phe-117 lines the substrate pocket. Cys-142 and Cys-145 together coordinate Zn(2+). 161–165 (IIEIG) contributes to the substrate binding site. Residues Cys-174 and Cys-177 each contribute to the Zn(2+) site.

It belongs to the thymidine kinase family.

It catalyses the reaction thymidine + ATP = dTMP + ADP + H(+). The sequence is that of Thymidine kinase (TK) from Amsacta moorei entomopoxvirus (AmEPV).